The sequence spans 83 residues: RNA-binding protein Hfq (83 aa).

Positions 10-70 (DTFLNQVRKE…ISTVMPLRPI (61 aa)) constitute a Sm domain.

Belongs to the Hfq family. Homohexamer.

In terms of biological role, RNA chaperone that binds small regulatory RNA (sRNAs) and mRNAs to facilitate mRNA translational regulation in response to envelope stress, environmental stress and changes in metabolite concentrations. Also binds with high specificity to tRNAs. The sequence is that of RNA-binding protein Hfq from Desulfitobacterium hafniense (strain Y51).